We begin with the raw amino-acid sequence, 524 residues long: Translation initiation factor eIF2B subunit delta (524 aa).

The disordered stretch occupies residues 1–173 (MATAAVAVRE…ERQQVPTRKD (173 aa)). Position 2 is an N-acetylalanine (Ala2). Position 12 is a phosphoserine (Ser12). The segment covering 26–40 (AEGREMTQEEKLQLR) has biased composition (basic and acidic residues). Basic residues predominate over residues 41-51 (KEKKQQKKKRK). Thr86 carries the phosphothreonine modification. Composition is skewed to basic and acidic residues over residues 87–121 (AKEKVPAGRSKAELRAERRAKQEAERAMKQARKGD) and 161–173 (KKPERQQVPTRKD). The tract at residues 171 to 180 (RKDYGSKVSL) is may bind the chemical integrated stress response (ISR) inhibitor ISRIB.

It belongs to the eIF-2B alpha/beta/delta subunits family. In terms of assembly, component of the translation initiation factor 2B (eIF2B) complex which is a heterodecamer of two sets of five different subunits: alpha, beta, gamma, delta and epsilon. Subunits alpha, beta and delta comprise a regulatory subcomplex and subunits epsilon and gamma comprise a catalytic subcomplex. Within the complex, the hexameric regulatory complex resides at the center, with the two heterodimeric catalytic subcomplexes bound on opposite sides.

It is found in the cytoplasm. The protein resides in the cytosol. With respect to regulation, activated by the chemical integrated stress response (ISR) inhibitor ISRIB which stimulates guanine nucleotide exchange factor activity for both phosphorylated and unphosphorylated eIF2. In terms of biological role, acts as a component of the translation initiation factor 2B (eIF2B) complex, which catalyzes the exchange of GDP for GTP on eukaryotic initiation factor 2 (eIF2) gamma subunit. Its guanine nucleotide exchange factor activity is repressed when bound to eIF2 complex phosphorylated on the alpha subunit, thereby limiting the amount of methionyl-initiator methionine tRNA available to the ribosome and consequently global translation is repressed. This Bos taurus (Bovine) protein is Translation initiation factor eIF2B subunit delta (EIF2B4).